The chain runs to 796 residues: Inactive dipeptidyl peptidase 10 (796 aa).

Residues 1–34 (MNQTASVSHHIKCQPSKTIKELGSNSPPQRNWKG) are Cytoplasmic-facing. Positions 1–56 (MNQTASVSHHIKCQPSKTIKELGSNSPPQRNWKGIAIALLVILVVCSLITMSVILL) are mediates effects on KCND2. Residues 35-55 (IAIALLVILVVCSLITMSVIL) form a helical; Signal-anchor for type II membrane protein membrane-spanning segment. Over 56-796 (LTPDELTNSS…VLPQEPEEDE (741 aa)) the chain is Extracellular. N-linked (GlcNAc...) asparagine glycans are attached at residues Asn-90, Asn-111, and Asn-119. Residues Tyr-138 and Tyr-143 each carry the phosphotyrosine modification. Asn-257, Asn-342, and Asn-748 each carry an N-linked (GlcNAc...) asparagine glycan.

It belongs to the peptidase S9B family. DPPIV subfamily. In terms of assembly, may form oligomers. Interacts with KCND1. Interacts with KCND2. In terms of processing, N-glycosylation is important for cell surface expression, specially at Asn-257, which is crucial. As to expression, found in serum, T-cells and brain (at protein level). Expressed in brain, pancreas, spinal cord and adrenal glands.

Its subcellular location is the cell membrane. Promotes cell surface expression of the potassium channel KCND2. Modulates the activity and gating characteristics of the potassium channel KCND2. Has no dipeptidyl aminopeptidase activity. This Homo sapiens (Human) protein is Inactive dipeptidyl peptidase 10 (DPP10).